The primary structure comprises 556 residues: Cytochrome P450 monooxygenase polC (556 aa).

Residues 17 to 37 traverse the membrane as a helical segment; it reads LCFAISLLCAVAIATFLHKLY. A heme-binding site is contributed by Cys-479.

This sequence belongs to the cytochrome P450 family. Heme is required as a cofactor.

Its subcellular location is the membrane. The catalysed reaction is motiol + 3 reduced [NADPH--hemoprotein reductase] + 3 O2 = 4beta-carboxyl motiol + 3 oxidized [NADPH--hemoprotein reductase] + 4 H2O + 4 H(+). Its pathway is secondary metabolite biosynthesis; terpenoid biosynthesis. Cytochrome P450 monooxygenase; part of the gene cluster that mediates the biosynthesis of antifungal fernane-type triterpenoid polytolypin. PolC uses motiol as a substrate and converts the methyl group at position C-4 to a carboxyl group. Within the pathway, the triterpene cyclase polA first catalyzes the cyclization of 2,3-oxidosqualene to motiol, polC converts the 4-alpha-methyl group of motiol to a carboxyl group, polB is responsible for appending a hydroxyl group at the 2-alpha position and polE is a dual functional P450, which can catalyze the formation of both the 1-beta-hydroxyl group and 10-beta-carboxyl group. The polypeptide is Cytochrome P450 monooxygenase polC (Polytolypa hystricis (strain UAMH7299)).